The sequence spans 289 residues: 4-diphosphocytidyl-2-C-methyl-D-erythritol kinase (289 aa).

Lys13 is a catalytic residue. Pro101–Ser111 serves as a coordination point for ATP. Asp143 is a catalytic residue.

Belongs to the GHMP kinase family. IspE subfamily.

It carries out the reaction 4-CDP-2-C-methyl-D-erythritol + ATP = 4-CDP-2-C-methyl-D-erythritol 2-phosphate + ADP + H(+). It participates in isoprenoid biosynthesis; isopentenyl diphosphate biosynthesis via DXP pathway; isopentenyl diphosphate from 1-deoxy-D-xylulose 5-phosphate: step 3/6. Functionally, catalyzes the phosphorylation of the position 2 hydroxy group of 4-diphosphocytidyl-2C-methyl-D-erythritol. The sequence is that of 4-diphosphocytidyl-2-C-methyl-D-erythritol kinase from Janthinobacterium sp. (strain Marseille) (Minibacterium massiliensis).